Consider the following 128-residue polypeptide: uncharacterized protein (128 aa).

A disordered region spans residues 25 to 61 (LPNRLPEGSTVGPKPDSSWEAGSQGNWGLTSSGAGQD). Polar residues predominate over residues 44-61 (EAGSQGNWGLTSSGAGQD).

This is an uncharacterized protein from Homo sapiens (Human).